The following is an 87-amino-acid chain: UPF0473 protein Dred_0776 (87 aa).

It belongs to the UPF0473 family.

The chain is UPF0473 protein Dred_0776 from Desulforamulus reducens (strain ATCC BAA-1160 / DSM 100696 / MI-1) (Desulfotomaculum reducens).